The chain runs to 97 residues: Co-chaperonin GroES (97 aa).

This sequence belongs to the GroES chaperonin family. As to quaternary structure, heptamer of 7 subunits arranged in a ring. Interacts with the chaperonin GroEL.

Its subcellular location is the cytoplasm. Its function is as follows. Together with the chaperonin GroEL, plays an essential role in assisting protein folding. The GroEL-GroES system forms a nano-cage that allows encapsulation of the non-native substrate proteins and provides a physical environment optimized to promote and accelerate protein folding. GroES binds to the apical surface of the GroEL ring, thereby capping the opening of the GroEL channel. This Pseudarthrobacter chlorophenolicus (strain ATCC 700700 / DSM 12829 / CIP 107037 / JCM 12360 / KCTC 9906 / NCIMB 13794 / A6) (Arthrobacter chlorophenolicus) protein is Co-chaperonin GroES.